A 196-amino-acid chain; its full sequence is UMP-CMP kinase (196 aa).

ATP is bound at residue 13–18 (GAGKGT). Residues 33 to 63 (SAGDLLREERSRTDSEFGQLIDSYIKEGKIV) are NMP. Residues arginine 39, 61 to 63 (KIV), and 93 to 96 (GFPR) each bind a ribonucleoside 5'-phosphate. Asparagine 100 provides a ligand contact to CMP. Residues 133–143 (ERGKSSGRTDD) form an LID region. Arginine 134 serves as a coordination point for ATP. The a ribonucleoside 5'-phosphate site is built by arginine 140 and arginine 151. Arginine 179 contacts ATP.

It belongs to the adenylate kinase family. UMP-CMP kinase subfamily. In terms of assembly, monomer. Requires Mg(2+) as cofactor.

It localises to the nucleus. The protein localises to the cytoplasm. The catalysed reaction is CMP + ATP = CDP + ADP. It carries out the reaction dCMP + ATP = dCDP + ADP. It catalyses the reaction UMP + ATP = UDP + ADP. The enzyme catalyses a 2'-deoxyribonucleoside 5'-diphosphate + ATP = a 2'-deoxyribonucleoside 5'-triphosphate + ADP. The catalysed reaction is a ribonucleoside 5'-diphosphate + ATP = a ribonucleoside 5'-triphosphate + ADP. In terms of biological role, catalyzes the phosphorylation of pyrimidine nucleoside monophosphates at the expense of ATP. Plays an important role in de novo pyrimidine nucleotide biosynthesis. Has preference for UMP and CMP as phosphate acceptors. Also displays broad nucleoside diphosphate kinase activity. This Danio rerio (Zebrafish) protein is UMP-CMP kinase (cmpk).